Consider the following 295-residue polypeptide: Small ribosomal subunit protein uS2 (295 aa).

Residues 242-295 (APVEPTLARELAPEAPAPEAPAEEAPAAEAAPAAEAAPAAEAAPAEASSEEQAG) form a disordered region. Over residues 264 to 288 (EEAPAAEAAPAAEAAPAAEAAPAEA) the composition is skewed to low complexity.

This sequence belongs to the universal ribosomal protein uS2 family.

The chain is Small ribosomal subunit protein uS2 from Phenylobacterium zucineum (strain HLK1).